We begin with the raw amino-acid sequence, 617 residues long: Protein fem-1 homolog C (617 aa).

An N-acetylmethionine modification is found at methionine 1. 7 ANK repeats span residues 2-31 (DLKT…KEEV), 40-70 (NGAT…SIEV), 82-111 (EGAP…SVNN), 115-144 (TNST…DLEV), 148-177 (HGHT…DVNR), 181-210 (KGNT…KMEK), and 213-242 (YGMT…TSKT). 2 TPR repeats span residues 245–279 (INAL…RYSD) and 338–371 (SYYI…QQSN). ANK repeat units follow at residues 481–523 (NNFS…DVNV) and 527–556 (DDNS…HFDA).

It belongs to the fem-1 family. As to quaternary structure, component of a Cul2-RING (CRL2) E3 ubiquitin-protein ligase complex, also named ECS (Elongin BC-CUL2/5-SOCS-box protein) complex, composed of CUL2, Elongin BC (ELOB and ELOC), RBX1 and substrate-specific adapter FEM1C. As to expression, widely expressed. Highly expressed in kidney, cardiac tissue, skeletal muscle and testis. Expressed at lower levels in other tissues, including cartilage.

It participates in protein modification; protein ubiquitination. Its function is as follows. Substrate-recognition component of a Cul2-RING (CRL2) E3 ubiquitin-protein ligase complex of the DesCEND (destruction via C-end degrons) pathway, which recognizes a C-degron located at the extreme C terminus of target proteins, leading to their ubiquitination and degradation. The C-degron recognized by the DesCEND pathway is usually a motif of less than ten residues and can be present in full-length proteins, truncated proteins or proteolytically cleaved forms. The CRL2(FEM1C) complex specifically recognizes proteins with an arginine at the C-terminus: recognizes and binds proteins ending with -Lys/Arg-Xaa-Arg and -Lys/Arg-Xaa-Xaa-Arg C-degrons, such as SIL1 or OR51B2, leading to their ubiquitination and degradation. The CRL2(FEM1C) complex mediates ubiquitination and degradation of truncated MSRB1/SEPX1 selenoproteins produced by failed UGA/Sec decoding. Promotes ubiquitination and degradation of SLBP. The sequence is that of Protein fem-1 homolog C from Homo sapiens (Human).